A 236-amino-acid polypeptide reads, in one-letter code: N-alpha-acetyltransferase 40 (236 aa).

Gly-2 carries N-myristoyl glycine lipidation. Residues 63 to 217 (SDLDQKTIDW…DCTYEILSKR (155 aa)) enclose the N-acetyltransferase domain. Substrate is bound by residues Tyr-85, 127-129 (DVE), and Tyr-138. Acetyl-CoA-binding positions include 140 to 142 (VQL) and 148 to 153 (RKGVGK). Substrate is bound at residue Thr-174. Residue Asn-179 participates in acetyl-CoA binding. Residue Tyr-211 coordinates substrate.

This sequence belongs to the acetyltransferase family. NAA40 subfamily.

The protein resides in the cytoplasm. It is found in the nucleus. The catalysed reaction is N-terminal L-seryl-[histone H4] + acetyl-CoA = N-terminal N(alpha)-acetyl-L-seryl-[histone H4] + CoA + H(+). It catalyses the reaction N-terminal L-seryl-[histone H2A] + acetyl-CoA = N-terminal N(alpha)-acetyl-L-seryl-[histone H2A] + CoA + H(+). Its function is as follows. N-alpha-acetyltransferase that specifically mediates the acetylation of the N-terminal residues of histones H4 and H2A. In contrast to other N-alpha-acetyltransferase, has a very specific selectivity for histones H4 and H2A N-terminus and specifically recognizes the 'Ser-Gly-Arg-Gly sequence'. This chain is N-alpha-acetyltransferase 40 (naa40), found in Xenopus laevis (African clawed frog).